The sequence spans 478 residues: Argininosuccinate synthase (478 aa).

ATP is bound by residues 17–25 (AFSGGLDTS) and Ala-43. Tyr-99 contributes to the L-citrulline binding site. Residues Gly-129 and Thr-131 each contribute to the ATP site. The L-aspartate site is built by Thr-131, Asn-135, and Asp-136. Asn-135 is an L-citrulline binding site. Residue Asp-136 coordinates ATP. Residues Arg-139 and Ser-192 each contribute to the L-citrulline site. Asp-194 lines the ATP pocket. L-citrulline-binding residues include Thr-201, Glu-203, and Glu-280.

This sequence belongs to the argininosuccinate synthase family. Type 2 subfamily. In terms of assembly, homotetramer.

It is found in the cytoplasm. The catalysed reaction is L-citrulline + L-aspartate + ATP = 2-(N(omega)-L-arginino)succinate + AMP + diphosphate + H(+). Its pathway is amino-acid biosynthesis; L-arginine biosynthesis; L-arginine from L-ornithine and carbamoyl phosphate: step 2/3. This chain is Argininosuccinate synthase, found in Leifsonia xyli subsp. xyli (strain CTCB07).